The primary structure comprises 504 residues: L-amino-acid oxidase (504 aa).

An N-terminal signal peptide occupies residues 1–18 (MNVFFMFSLLFLATLGSC). Cys-28 and Cys-191 are disulfide-bonded. FAD-binding positions include 61–62 (MS), 81–82 (EA), Arg-89, and 105–108 (GPMR). Arg-108 is a substrate binding site. Residue Asn-190 is glycosylated (N-linked (GlcNAc...) asparagine). A substrate-binding site is contributed by His-241. FAD is bound at residue Val-279. A disulfide bond links Cys-349 and Cys-430. A glycan (N-linked (GlcNAc...) asparagine) is linked at Asn-379. Tyr-390 lines the substrate pocket. FAD contacts are provided by residues Glu-475 and 482 to 487 (GWIDST). 482 to 483 (GW) contributes to the substrate binding site.

The protein belongs to the flavin monoamine oxidase family. FIG1 subfamily. As to quaternary structure, homodimer; non-covalently linked. The cofactor is FAD. As to expression, expressed by the venom gland.

It is found in the secreted. It catalyses the reaction an L-alpha-amino acid + O2 + H2O = a 2-oxocarboxylate + H2O2 + NH4(+). The enzyme catalyses L-leucine + O2 + H2O = 4-methyl-2-oxopentanoate + H2O2 + NH4(+). It carries out the reaction L-phenylalanine + O2 + H2O = 3-phenylpyruvate + H2O2 + NH4(+). The catalysed reaction is L-tryptophan + O2 + H2O = indole-3-pyruvate + H2O2 + NH4(+). It catalyses the reaction L-methionine + O2 + H2O = 4-methylsulfanyl-2-oxobutanoate + H2O2 + NH4(+). The enzyme catalyses L-tyrosine + O2 + H2O = 3-(4-hydroxyphenyl)pyruvate + H2O2 + NH4(+). Functionally, catalyzes an oxidative deamination of predominantly hydrophobic and aromatic L-amino acids, thus producing hydrogen peroxide that may contribute to the diverse toxic effects of this enzyme. Is highly active on L-Tyr followed by L-Phe, L-Met, L-Leu, L-Trp, and weakly active on L-Ile, L-Arg, L-Val, L-Lys, and L-Ala. Inhibits ADP- and collagen-induced platelet aggregation. This inhibition is inhibited by catalase, indicating the importance of generated H(2)O(2) for the inhibitory effect. This effect on platelets among snake L-amino-acid oxidases is however controversial, since some of them induce aggregation, whereas the other inhibit agonist-induced aggregation. In vivo, this enzyme induces a rapid, substantial and reversible increase in the paw volume of mice (edema). In addition, myofibrosis, and inflammatory cell infiltration on the paw tissue are also observed. The sequence is that of L-amino-acid oxidase from Daboia russelii (Russel's viper).